The following is a 101-amino-acid chain: Small ribosomal subunit protein uS14 (101 aa).

The protein belongs to the universal ribosomal protein uS14 family. In terms of assembly, part of the 30S ribosomal subunit. Contacts proteins S3 and S10.

Binds 16S rRNA, required for the assembly of 30S particles and may also be responsible for determining the conformation of the 16S rRNA at the A site. The chain is Small ribosomal subunit protein uS14 from Burkholderia multivorans (strain ATCC 17616 / 249).